A 612-amino-acid polypeptide reads, in one-letter code: Dihydroxy-acid dehydratase (612 aa).

Asp81 contacts Mg(2+). Cys122 contacts [2Fe-2S] cluster. Mg(2+)-binding residues include Asp123 and Lys124. Lys124 carries the post-translational modification N6-carboxylysine. Cys193 is a [2Fe-2S] cluster binding site. Glu489 contacts Mg(2+). Ser515 (proton acceptor) is an active-site residue.

It belongs to the IlvD/Edd family. In terms of assembly, homodimer. [2Fe-2S] cluster serves as cofactor. Mg(2+) is required as a cofactor.

The enzyme catalyses (2R)-2,3-dihydroxy-3-methylbutanoate = 3-methyl-2-oxobutanoate + H2O. It carries out the reaction (2R,3R)-2,3-dihydroxy-3-methylpentanoate = (S)-3-methyl-2-oxopentanoate + H2O. Its pathway is amino-acid biosynthesis; L-isoleucine biosynthesis; L-isoleucine from 2-oxobutanoate: step 3/4. The protein operates within amino-acid biosynthesis; L-valine biosynthesis; L-valine from pyruvate: step 3/4. Its function is as follows. Functions in the biosynthesis of branched-chain amino acids. Catalyzes the dehydration of (2R,3R)-2,3-dihydroxy-3-methylpentanoate (2,3-dihydroxy-3-methylvalerate) into 2-oxo-3-methylpentanoate (2-oxo-3-methylvalerate) and of (2R)-2,3-dihydroxy-3-methylbutanoate (2,3-dihydroxyisovalerate) into 2-oxo-3-methylbutanoate (2-oxoisovalerate), the penultimate precursor to L-isoleucine and L-valine, respectively. In Xanthomonas campestris pv. campestris (strain B100), this protein is Dihydroxy-acid dehydratase.